Reading from the N-terminus, the 397-residue chain is Phosphoglycerate kinase (397 aa).

Substrate-binding positions include 21-23 (DFN), R37, 60-63 (HLGR), R119, and R152. Residues K203, G294, E325, and 354 to 357 (GGDS) each bind ATP.

This sequence belongs to the phosphoglycerate kinase family. In terms of assembly, monomer.

It localises to the cytoplasm. The enzyme catalyses (2R)-3-phosphoglycerate + ATP = (2R)-3-phospho-glyceroyl phosphate + ADP. The protein operates within carbohydrate degradation; glycolysis; pyruvate from D-glyceraldehyde 3-phosphate: step 2/5. The polypeptide is Phosphoglycerate kinase (Chlorobaculum tepidum (strain ATCC 49652 / DSM 12025 / NBRC 103806 / TLS) (Chlorobium tepidum)).